Reading from the N-terminus, the 466-residue chain is MTIRLYDTSARQIRDFTPLLPGCVSIYLCGATVQAAPHIGHIRSGLNFDIMRRWFEYRGYDVTFIRNVTDIDDKIIAKSADHGRPWWAIGYENERAFNDGYDVLGCLPPTYEPRATGHITEMVEMMRTLIERGHAYEADGNVYFDVRSFPEYLQLSNQELDNLLQPSGEGETGKRDPRDFAMWKAAKPGEPTWETPWGRGRPGWHLECSAMAHKYLGSAFDIHGGGLDLIFPHHENEIAQAKAFGDEFARYWVHNAWVTMSGEKMSKSLGNSVLVSEMVKQWRPIVLRYYLGTPHYRSMIEYSEEALREAESAFARIEGFVQRVVEKAGGVVEPSPEVPPAFAEAMDDDLGVPQALAIVHTTVRQGNSALAADDKEAAVARLAEVRAMLGVLGLDPLDPQWAGEGDRGEDLHGVVDTLVRMVLDQREAARARKDWATADAIRDQLNQSGLVIEDSPQGPRWTLGPR.

Cys29 is a binding site for Zn(2+). Positions 31-41 (ATVQAAPHIGH) match the 'HIGH' region motif. Positions 208, 233, and 237 each coordinate Zn(2+). Residues 264–268 (KMSKS) carry the 'KMSKS' region motif. Lys267 is an ATP binding site.

The protein belongs to the class-I aminoacyl-tRNA synthetase family. As to quaternary structure, monomer. Requires Zn(2+) as cofactor.

It is found in the cytoplasm. It carries out the reaction tRNA(Cys) + L-cysteine + ATP = L-cysteinyl-tRNA(Cys) + AMP + diphosphate. In Streptomyces avermitilis (strain ATCC 31267 / DSM 46492 / JCM 5070 / NBRC 14893 / NCIMB 12804 / NRRL 8165 / MA-4680), this protein is Cysteine--tRNA ligase.